Reading from the N-terminus, the 269-residue chain is Ribonuclease HII (269 aa).

The RNase H type-2 domain occupies 61–250; sequence RLVCGVDEAG…VRKMLSPGLE (190 aa). Residues Asp67, Glu68, and Asp158 each coordinate a divalent metal cation.

Belongs to the RNase HII family. Mn(2+) serves as cofactor. Mg(2+) is required as a cofactor.

It localises to the cytoplasm. It catalyses the reaction Endonucleolytic cleavage to 5'-phosphomonoester.. Its function is as follows. Endonuclease that specifically degrades the RNA of RNA-DNA hybrids. This chain is Ribonuclease HII, found in Parvibaculum lavamentivorans (strain DS-1 / DSM 13023 / NCIMB 13966).